The primary structure comprises 341 residues: HTH-type transcriptional repressor PurR (341 aa).

Residues 2-56 (ATIKDVAKRAGVSTTTVSHVINKTRFVAEETKAAVRAAIKELHYSPSAVARSLKV) form the HTH lacI-type domain. A DNA-binding region (H-T-H motif) is located at residues 4–23 (IKDVAKRAGVSTTTVSHVIN). A DNA-binding region spans residues 48 to 56 (SAVARSLKV). Residues tyrosine 73, arginine 190, threonine 192, phenylalanine 221, and aspartate 275 each coordinate hypoxanthine.

As to quaternary structure, homodimer.

It functions in the pathway purine metabolism; purine nucleotide biosynthesis [regulation]. In terms of biological role, is the main repressor of the genes involved in the de novo synthesis of purine nucleotides, regulating purB, purC, purEK, purF, purHD, purL, purMN and guaBA expression. PurR is allosterically activated to bind its cognate DNA by binding the purine corepressors, hypoxanthine or guanine, thereby effecting transcription repression. The sequence is that of HTH-type transcriptional repressor PurR from Pectobacterium atrosepticum (strain SCRI 1043 / ATCC BAA-672) (Erwinia carotovora subsp. atroseptica).